The chain runs to 490 residues: Probable G-protein coupled receptor npr-8 (490 aa).

Residues 1 to 55 (MEVKDIDNYCDRGISPNASNYLTYPFDGLCLQKFFYQLQTSLRRFTPYEEIIYTT) lie on the Extracellular side of the membrane. Asn17 carries an N-linked (GlcNAc...) asparagine glycan. The chain crosses the membrane as a helical span at residues 56–76 (VYIIISVAAVIGNGLVIMAVV). Residues 77 to 86 (RKKTMRTNRN) are Cytoplasmic-facing. The chain crosses the membrane as a helical span at residues 87–107 (VLILNLALSNLILAITNIPFL). At 108-125 (WLPSIDFEFPYSRFFCKF) the chain is on the extracellular side. The helical transmembrane segment at 126-146 (ANVLPGSNIYCSTLTISVMAI) threads the bilayer. Residues 147–166 (DRYYSVKKLKIASNRKQCFH) are Cytoplasmic-facing. A helical transmembrane segment spans residues 167–187 (AVLVSLAIWIVSFILSLPLLL). Residues 188–236 (YYETSMLYVMREIRVVDQSGQEVIRSYGWRQCRLVSAGRLPDITQSIQL) are Extracellular-facing. A helical membrane pass occupies residues 237 to 257 (LMSILQVAFLYIVPLFVLSIF). Residues 258-331 (NVKLTRFLKT…QRTNRTTSLL (74 aa)) lie on the Cytoplasmic side of the membrane. The disordered stretch occupies residues 272 to 322 (MSKTRAPPKRFDRSDSHHNSLKNNNNHTSSLRSPSMPSIRSSITERNKTNQ). Basic and acidic residues predominate over residues 280–289 (KRFDRSDSHH). The span at 292–313 (LKNNNNHTSSLRSPSMPSIRSS) shows a compositional bias: low complexity. Residues 332–352 (IAMAGSYAALWFPFTLITFLI) traverse the membrane as a helical segment. Topologically, residues 353–374 (DFELIINQDYVNLVERIDQTCK) are extracellular. The helical transmembrane segment at 375 to 395 (MVSMLSICVNPFLYGFLNTNF) threads the bilayer. Residues 396-490 (RHEFSDIYYR…DDDIEKDSFV (95 aa)) lie on the Cytoplasmic side of the membrane.

It belongs to the G-protein coupled receptor 1 family.

The protein localises to the cell membrane. In terms of biological role, not known. Putative receptor. This is Probable G-protein coupled receptor npr-8 from Caenorhabditis elegans.